The chain runs to 498 residues: Glutamate--tRNA ligase (498 aa).

A 'HIGH' region motif is present at residues 10 to 20 (PSPTGYFHIGG). The 'KMSKS' region motif lies at 252–256 (KLSKR). Lys255 lines the ATP pocket.

Belongs to the class-I aminoacyl-tRNA synthetase family. Glutamate--tRNA ligase type 1 subfamily. In terms of assembly, monomer.

The protein localises to the cytoplasm. It carries out the reaction tRNA(Glu) + L-glutamate + ATP = L-glutamyl-tRNA(Glu) + AMP + diphosphate. Its function is as follows. Catalyzes the attachment of glutamate to tRNA(Glu) in a two-step reaction: glutamate is first activated by ATP to form Glu-AMP and then transferred to the acceptor end of tRNA(Glu). The sequence is that of Glutamate--tRNA ligase from Mycoplasmoides gallisepticum (strain R(low / passage 15 / clone 2)) (Mycoplasma gallisepticum).